Reading from the N-terminus, the 554-residue chain is Protein SINE2 (554 aa).

An ARMADILLO-type fold region spans residues 17–290 (DKDPDSHKTA…MAAHETMRQA (274 aa)). Disordered stretches follow at residues 306-332 (CKPRNSLSGSVKSTSSLREHDGSVYSR), 411-442 (NESVCSRTNRSRSSRRNTKKRQSGDICSKHHR), and 465-487 (ETSSSSSIYDTSGTTTPTNTTED). Over residues 311 to 321 (SLSGSVKSTSS) the composition is skewed to low complexity. The span at 322-332 (LREHDGSVYSR) shows a compositional bias: basic and acidic residues. Positions 419–431 (NRSRSSRRNTKKR) are enriched in basic residues. Over residues 465–485 (ETSSSSSIYDTSGTTTPTNTT) the composition is skewed to low complexity. Positions 509 to 554 (LDPRLGRSKGVLKLGLSVFSIAVAGFASFMWMYLQDDMMPPHLVPT) constitute a KASH domain. Residues 522–542 (LGLSVFSIAVAGFASFMWMYL) traverse the membrane as a helical segment. A Required for nuclear localization motif is present at residues 551–554 (LVPT).

As to quaternary structure, interacts with SUN1 and SUN2. In terms of tissue distribution, expressed in epidermal cells, mesophyll cells, trichomes and root cells.

It localises to the nucleus membrane. Functionally, plays a role in innate immunity against the oomycete pathogen A.arabidopsidis (Hpa). The sequence is that of Protein SINE2 from Arabidopsis thaliana (Mouse-ear cress).